We begin with the raw amino-acid sequence, 260 residues long: Snake venom serine protease homolog (260 aa).

The signal sequence occupies residues 1–18 (MVLVRVLANLLMLQLSYA). The propeptide occupies 19-24 (QKSSEL). The Peptidase S1 domain maps to 25-251 (IIGGDECNIN…HLNWIQSIIA (227 aa)). 6 disulfide bridges follow: Cys31-Cys165, Cys52-Cys68, Cys100-Cys258, Cys144-Cys212, Cys176-Cys191, and Cys202-Cys227. N-linked (GlcNAc...) asparagine glycans are attached at residues Asn123 and Asn124. The N-linked (GlcNAc...) asparagine glycan is linked to Asn253.

The protein belongs to the peptidase S1 family. Snake venom subfamily. As to expression, expressed by the venom gland.

It localises to the secreted. Its function is as follows. Snake venom serine protease homolog that may act in the hemostasis system of the prey. This chain is Snake venom serine protease homolog, found in Protobothrops jerdonii (Jerdon's pitviper).